A 391-amino-acid chain; its full sequence is Metal tolerance protein 7 (391 aa).

The interval 1-21 (MGSRGRRGGGERETETEEDET) is disordered. Residues 1-103 (MGSRGRRGGG…LRQMAKGERL (103 aa)) lie on the Cytoplasmic side of the membrane. A helical transmembrane segment spans residues 104–124 (AINLSNIINLILFIGKVLASV). The Vacuolar portion of the chain corresponds to 125–134 (ESLSMAVIAS). Residues 135-155 (TLDSLLDLLSGFILWFTAHAM) traverse the membrane as a helical segment. Residues 156–171 (KKPNKYSYPIGKRRMQ) lie on the Cytoplasmic side of the membrane. The helical transmembrane segment at 172-192 (PVGIIVFASVMGTLGFQVLIE) threads the bilayer. The Vacuolar portion of the chain corresponds to 193 to 210 (SGRQLITNEHQVFDHRKE). Residues 211–231 (LWMIGSMSSVAVVKFFLMLYC) traverse the membrane as a helical segment. Residues 232-246 (RSFKNEIVRAYAQDH) lie on the Cytoplasmic side of the membrane. The chain crosses the membrane as a helical span at residues 247 to 264 (FFDVITNSVGLVSALLAV). At 265–266 (RY) the chain is on the vacuolar side. Residues 267 to 287 (KWWMDPVGAILIAVYTITTWA) form a helical membrane-spanning segment. The Cytoplasmic segment spans residues 288-391 (RTVVENVGTL…THRPEHKAEV (104 aa)).

The protein belongs to the cation diffusion facilitator (CDF) transporter (TC 2.A.4) family. SLC30A subfamily.

Its subcellular location is the vacuole membrane. In terms of biological role, involved in sequestration of excess metal in the cytoplasm into vacuoles to maintain metal homeostasis. The protein is Metal tolerance protein 7 (MTP7) of Oryza sativa subsp. japonica (Rice).